We begin with the raw amino-acid sequence, 531 residues long: Na(+)/H(+) antiporter NhaB (531 aa).

The next 11 membrane-spanning stretches (helical) occupy residues 23 to 45 (IAIL…VAGW), 66 to 86 (PGGL…SQVL), 97 to 117 (LLLI…LFVF), 130 to 164 (VSLM…FYSI), 206 to 226 (LLMH…VGEP), 244 to 264 (LRMG…CFLV), 307 to 327 (AFVG…VGLI), 352 to 372 (EEAL…GVII), 393 to 413 (LVIF…VFVG), 451 to 471 (ATPN…APLI), and 478 to 498 (MVWM…LAIE).

It belongs to the NhaB Na(+)/H(+) (TC 2.A.34) antiporter family.

It is found in the cell inner membrane. It carries out the reaction 2 Na(+)(in) + 3 H(+)(out) = 2 Na(+)(out) + 3 H(+)(in). Functionally, na(+)/H(+) antiporter that extrudes sodium in exchange for external protons. The protein is Na(+)/H(+) antiporter NhaB of Shewanella loihica (strain ATCC BAA-1088 / PV-4).